The primary structure comprises 383 residues: Na(+)/H(+) antiporter NhaA (383 aa).

Helical transmembrane passes span 14 to 34 (AGGI…NSPL), 47 to 67 (FGMS…FLLI), 87 to 107 (IFPA…YVAF), 117 to 137 (GWAI…ALLG), 146 to 166 (VFLL…IALF), 171 to 191 (LSSM…MLNA), 205 to 225 (AILW…GVVI), 252 to 272 (VAFG…LEGV), 280 to 300 (MLPL…IFSF), 321 to 341 (IFAV…ISSL), and 356 to 376 (LGIL…LHFS).

This sequence belongs to the NhaA Na(+)/H(+) (TC 2.A.33) antiporter family.

Its subcellular location is the cell inner membrane. It carries out the reaction Na(+)(in) + 2 H(+)(out) = Na(+)(out) + 2 H(+)(in). The enzyme catalyses Li(+)(in) + 2 H(+)(out) = Li(+)(out) + 2 H(+)(in). With respect to regulation, activity is regulated by pH. Active at alkaline pH. Amiloride strongly reduces affinity for Na(+), but does not change the Vmax. Na(+)/H(+) antiporter that extrudes sodium in exchange for external protons. Can also transport lithium and potassium. This chain is Na(+)/H(+) antiporter NhaA, found in Vibrio parahaemolyticus serotype O3:K6 (strain RIMD 2210633).